Here is a 764-residue protein sequence, read N- to C-terminus: Phenylalanine--tRNA ligase beta subunit (764 aa).

In terms of domain architecture, tRNA-binding spans 38–148; sequence CIAPKNVVVG…GELVLGKELN (111 aa). The B5 domain maps to 375-455; that stretch reads LKDRTLTFQL…RFVGIDNLVS (81 aa). Residues aspartate 433, aspartate 439, glutamate 442, and glutamate 443 each contribute to the Mg(2+) site. The 91-residue stretch at 673–763 folds into the FDX-ACB domain; that stretch reads SIYPSSVRDL…LEKEFNARLK (91 aa).

It belongs to the phenylalanyl-tRNA synthetase beta subunit family. Type 1 subfamily. As to quaternary structure, tetramer of two alpha and two beta subunits. Mg(2+) serves as cofactor.

It localises to the cytoplasm. The enzyme catalyses tRNA(Phe) + L-phenylalanine + ATP = L-phenylalanyl-tRNA(Phe) + AMP + diphosphate + H(+). In Helicobacter pylori (strain ATCC 700392 / 26695) (Campylobacter pylori), this protein is Phenylalanine--tRNA ligase beta subunit (pheT).